We begin with the raw amino-acid sequence, 957 residues long: Glycine dehydrogenase (decarboxylating) (957 aa).

K708 is modified (N6-(pyridoxal phosphate)lysine).

It belongs to the GcvP family. As to quaternary structure, the glycine cleavage system is composed of four proteins: P, T, L and H. It depends on pyridoxal 5'-phosphate as a cofactor.

It catalyses the reaction N(6)-[(R)-lipoyl]-L-lysyl-[glycine-cleavage complex H protein] + glycine + H(+) = N(6)-[(R)-S(8)-aminomethyldihydrolipoyl]-L-lysyl-[glycine-cleavage complex H protein] + CO2. Functionally, the glycine cleavage system catalyzes the degradation of glycine. The P protein binds the alpha-amino group of glycine through its pyridoxal phosphate cofactor; CO(2) is released and the remaining methylamine moiety is then transferred to the lipoamide cofactor of the H protein. In Salmonella newport (strain SL254), this protein is Glycine dehydrogenase (decarboxylating).